The chain runs to 89 residues: Pigment dispersing factor homolog pdf-2 (89 aa).

The N-terminal stretch at 1-27 is a signal peptide; that stretch reads MSSRISVSLLLLAVVATMFFTANVVDA.

Probable ligand of isoforms a and b of the calcitonin receptor-like protein, pdfr-1, a G-protein coupled receptor. May not signal through isoform c of pdfr-1. Involved in locomotion; may play a role in circadian rhythms of locomotor activity. Modulator of egg-laying. The polypeptide is Pigment dispersing factor homolog pdf-2 (Caenorhabditis elegans).